The chain runs to 632 residues: Phosphomethylpyrimidine synthase (632 aa).

Positions 1–23 (MNIRSNPQQTVPAVTTGPLSSSR) are enriched in polar residues. The interval 1-26 (MNIRSNPQQTVPAVTTGPLSSSRKIF) is disordered. Substrate-binding positions include asparagine 221, methionine 250, tyrosine 279, histidine 315, 335–337 (SRG), 376–379 (DGLR), and glutamate 415. Histidine 419 serves as a coordination point for Zn(2+). Residue tyrosine 442 participates in substrate binding. Residue histidine 483 participates in Zn(2+) binding. Residues cysteine 563, cysteine 566, and cysteine 571 each coordinate [4Fe-4S] cluster.

The protein belongs to the ThiC family. As to quaternary structure, homodimer. It depends on [4Fe-4S] cluster as a cofactor.

The catalysed reaction is 5-amino-1-(5-phospho-beta-D-ribosyl)imidazole + S-adenosyl-L-methionine = 4-amino-2-methyl-5-(phosphooxymethyl)pyrimidine + CO + 5'-deoxyadenosine + formate + L-methionine + 3 H(+). The protein operates within cofactor biosynthesis; thiamine diphosphate biosynthesis. Functionally, catalyzes the synthesis of the hydroxymethylpyrimidine phosphate (HMP-P) moiety of thiamine from aminoimidazole ribotide (AIR) in a radical S-adenosyl-L-methionine (SAM)-dependent reaction. The chain is Phosphomethylpyrimidine synthase from Bradyrhizobium diazoefficiens (strain JCM 10833 / BCRC 13528 / IAM 13628 / NBRC 14792 / USDA 110).